The sequence spans 334 residues: TPR repeat-containing protein YsoA (334 aa).

TPR repeat units lie at residues 17–50, 52–84, and 195–230; these read KDRL…DDTE, DLHL…GYGH, and HPII…EPSE.

This is TPR repeat-containing protein YsoA (ysoA) from Bacillus subtilis (strain 168).